Consider the following 232-residue polypeptide: LexA repressor (232 aa).

Residues 36 to 56 (IREIGDAAGLQSTSSVAYQLK) constitute a DNA-binding region (H-T-H motif). Residues 62-86 (GFLRRDPNKPRAVDVRHLPETDNRT) are compositionally biased toward basic and acidic residues. The tract at residues 62–107 (GFLRRDPNKPRAVDVRHLPETDNRTKAGPKAKARPTAGASPQPELA) is disordered. Residues serine 156 and lysine 193 each act as for autocatalytic cleavage activity in the active site.

It belongs to the peptidase S24 family. Homodimer.

The catalysed reaction is Hydrolysis of Ala-|-Gly bond in repressor LexA.. Functionally, represses a number of genes involved in the response to DNA damage (SOS response), including recA and lexA. In the presence of single-stranded DNA, RecA interacts with LexA causing an autocatalytic cleavage which disrupts the DNA-binding part of LexA, leading to derepression of the SOS regulon and eventually DNA repair. The polypeptide is LexA repressor (Corynebacterium efficiens (strain DSM 44549 / YS-314 / AJ 12310 / JCM 11189 / NBRC 100395)).